Here is a 233-residue protein sequence, read N- to C-terminus: Glucosamine-6-phosphate deaminase (233 aa).

The active-site Proton acceptor; for enolization step is the aspartate 62. Catalysis depends on asparagine 128, which acts as the For ring-opening step. The active-site Proton acceptor; for ring-opening step is the histidine 130. The active-site For ring-opening step is the glutamate 135.

This sequence belongs to the glucosamine/galactosamine-6-phosphate isomerase family. NagB subfamily.

It carries out the reaction alpha-D-glucosamine 6-phosphate + H2O = beta-D-fructose 6-phosphate + NH4(+). It functions in the pathway amino-sugar metabolism; N-acetylneuraminate degradation; D-fructose 6-phosphate from N-acetylneuraminate: step 5/5. Catalyzes the reversible isomerization-deamination of glucosamine 6-phosphate (GlcN6P) to form fructose 6-phosphate (Fru6P) and ammonium ion. This chain is Glucosamine-6-phosphate deaminase, found in Streptococcus thermophilus (strain ATCC BAA-491 / LMD-9).